Consider the following 289-residue polypeptide: Inorganic pyrophosphatase (289 aa).

At S2 the chain carries N-acetylserine. At K57 the chain carries N6-acetyllysine. Residues D116, D121, and D153 each coordinate Mg(2+). S250 is modified (phosphoserine).

The protein belongs to the PPase family. Homodimer. It depends on Mg(2+) as a cofactor. In terms of processing, the N-terminus is blocked. As to expression, highest levels are found in retinal rod outer segments.

The protein localises to the cytoplasm. The enzyme catalyses diphosphate + H2O = 2 phosphate + H(+). This Bos taurus (Bovine) protein is Inorganic pyrophosphatase (PPA1).